The chain runs to 481 residues: Bindin (481 aa).

The N-terminal stretch at Met-1–Ala-20 is a signal peptide. A propeptide spanning residues Glu-21–Arg-245 is cleaved from the precursor. Composition is skewed to basic and acidic residues over residues Asp-154 to Ser-163 and Arg-178 to Lys-189. 2 disordered regions span residues Asp-154–Pro-193 and Gly-219–Lys-243. Residues Leu-352–Asn-360 are fucose-binding domain. The segment at Ser-376 to Gly-481 is disordered. The span at Gln-379–Ala-389 shows a compositional bias: acidic residues. Gly residues predominate over residues Ala-406–Ala-416. Composition is skewed to low complexity over residues Met-417–Pro-440 and Gly-464–Gly-481.

It belongs to the bindin family.

It localises to the cytoplasmic vesicle. It is found in the secretory vesicle. The protein localises to the acrosome lumen. Its function is as follows. Species-specific sea urchin sperm protein required for adhesion of sperm to the egg surface during fertilization. Bindin coats the acrosomal process after it is externalized by the acrosome reaction. It binds to sulfated, fucose-containing polysaccharides on the vitelline layer receptor proteoglycans which cover the egg plasma membrane. This chain is Bindin, found in Strongylocentrotus purpuratus (Purple sea urchin).